Reading from the N-terminus, the 378-residue chain is Spermidine/putrescine import ATP-binding protein PotA (378 aa).

Residues Val18–Ile248 enclose the ABC transporter domain. Residue Gly50–Thr57 participates in ATP binding.

It belongs to the ABC transporter superfamily. Spermidine/putrescine importer (TC 3.A.1.11.1) family. The complex is composed of two ATP-binding proteins (PotA), two transmembrane proteins (PotB and PotC) and a solute-binding protein (PotD).

It is found in the cell inner membrane. The enzyme catalyses ATP + H2O + polyamine-[polyamine-binding protein]Side 1 = ADP + phosphate + polyamineSide 2 + [polyamine-binding protein]Side 1.. In terms of biological role, part of the ABC transporter complex PotABCD involved in spermidine/putrescine import. Responsible for energy coupling to the transport system. The polypeptide is Spermidine/putrescine import ATP-binding protein PotA (Salmonella choleraesuis (strain SC-B67)).